The chain runs to 98 residues: Ig heavy chain V region 6.96 (98 aa).

In terms of domain architecture, Ig-like spans 1 to 98; sequence EVQLVESGGG…EDTAMYYCAR (98 aa).

In Mus musculus (Mouse), this protein is Ig heavy chain V region 6.96.